We begin with the raw amino-acid sequence, 307 residues long: tRNA pseudouridine synthase B (307 aa).

Asp-38 functions as the Nucleophile in the catalytic mechanism.

It belongs to the pseudouridine synthase TruB family. Type 1 subfamily.

The catalysed reaction is uridine(55) in tRNA = pseudouridine(55) in tRNA. Responsible for synthesis of pseudouridine from uracil-55 in the psi GC loop of transfer RNAs. This Bacillus cereus (strain ZK / E33L) protein is tRNA pseudouridine synthase B.